The chain runs to 122 residues: LYR motif-containing protein 1 (122 aa).

Belongs to the complex I LYR family.

The polypeptide is LYR motif-containing protein 1 (lyrm1) (Xenopus laevis (African clawed frog)).